The chain runs to 530 residues: Membrane-bound lytic murein transglycosylase F (530 aa).

Residues M1–I27 form the signal peptide. A non-LT domain region spans residues D28–I279. The LT domain stretch occupies residues G280–N530. E324 is a catalytic residue. The segment at A505 to N530 is disordered. Residues N513–N530 show a composition bias toward low complexity.

In the N-terminal section; belongs to the bacterial solute-binding protein 3 family. This sequence in the C-terminal section; belongs to the transglycosylase Slt family.

The protein resides in the cell outer membrane. The catalysed reaction is Exolytic cleavage of the (1-&gt;4)-beta-glycosidic linkage between N-acetylmuramic acid (MurNAc) and N-acetylglucosamine (GlcNAc) residues in peptidoglycan, from either the reducing or the non-reducing ends of the peptidoglycan chains, with concomitant formation of a 1,6-anhydrobond in the MurNAc residue.. Functionally, murein-degrading enzyme that degrades murein glycan strands and insoluble, high-molecular weight murein sacculi, with the concomitant formation of a 1,6-anhydromuramoyl product. Lytic transglycosylases (LTs) play an integral role in the metabolism of the peptidoglycan (PG) sacculus. Their lytic action creates space within the PG sacculus to allow for its expansion as well as for the insertion of various structures such as secretion systems and flagella. This Vibrio cholerae serotype O1 (strain ATCC 39541 / Classical Ogawa 395 / O395) protein is Membrane-bound lytic murein transglycosylase F.